The primary structure comprises 1441 residues: Receptor-type tyrosine-protein phosphatase T (1441 aa).

Positions 1–25 are cleaved as a signal peptide; sequence MASLAALALSLLLRLQLPPLPGARA. The Extracellular portion of the chain corresponds to 26-747; the sequence is QSAAGGCSFD…EKQVDNTVKM (722 aa). Residues 30 to 191 enclose the MAM domain; the sequence is GGCSFDEHYS…VRVLAHPCRK (162 aa). 4 N-linked (GlcNAc...) asparagine glycosylation sites follow: Asn78, Asn98, Asn137, and Asn208. One can recognise an Ig-like C2-type domain in the interval 193–284; that stretch reads PHFLRLQNVE…SGVSNYAELI (92 aa). Residues Cys213 and Cys267 are joined by a disulfide bond. Fibronectin type-III domains are found at residues 291-384, 389-483, 484-590, and 591-726; these read PIAP…TKCA, GPQN…TEED, VPGA…SAPS, and MPEY…ATKG. 6 N-linked (GlcNAc...) asparagine glycosylation sites follow: Asn421, Asn510, Asn547, Asn601, Asn654, and Asn684. A helical membrane pass occupies residues 748 to 768; that stretch reads AGVIAGLLMFIIILLGVMLTI. Over 769–1441 the chain is Cytoplasmic; the sequence is KRRRNAYSYS…EVALEYLSSF (673 aa). The disordered stretch occupies residues 790–839; that stretch reads TQSGAQREMGPVASADKPTTKLSASRNDEGFSSSSQDVNGFTDGSRGELS. The span at 809–828 shows a compositional bias: polar residues; it reads TKLSASRNDEGFSSSSQDVN. Tyrosine-protein phosphatase domains follow at residues 889–1143 and 1175–1437; these read FKEE…ILEA and IKDE…ALEY. Substrate contacts are provided by residues Asp1052, 1084–1090, and Gln1128; that span reads CSAGAGR. The active-site Phosphocysteine intermediate is the Cys1084. Residue Ser1208 is modified to Phosphoserine. Cys1378 (phosphocysteine intermediate) is an active-site residue.

This sequence belongs to the protein-tyrosine phosphatase family. Receptor class 2B subfamily. As to expression, expressed in colon, lung, heart and testis, as well as in fetal and adult brain. Not detected in muscle and peripheral blood leukocytes.

Its subcellular location is the membrane. It carries out the reaction O-phospho-L-tyrosyl-[protein] + H2O = L-tyrosyl-[protein] + phosphate. In terms of biological role, may be involved in both signal transduction and cellular adhesion in the CNS. The chain is Receptor-type tyrosine-protein phosphatase T (PTPRT) from Homo sapiens (Human).